A 227-amino-acid chain; its full sequence is Prolactin-4A1 (227 aa).

The signal sequence occupies residues 1–31 (MHLSLTPQWSSWTVLLLLVSNLLLWENTASA). 2 disulfide bridges follow: C87–C203 and C220–C227. An N-linked (GlcNAc...) asparagine glycan is attached at N175.

It belongs to the somatotropin/prolactin family. Expressed specifically in placenta. Expressed in both trophoblast giant cells and spongiotrophoblast cells.

The protein resides in the secreted. The chain is Prolactin-4A1 (Prl4a1) from Mus musculus (Mouse).